The primary structure comprises 72 residues: Translation initiation factor IF-1 2 (72 aa).

The S1-like domain maps to 1–72; that stretch reads MAKEELIEFE…TKGRINYRHK (72 aa).

It belongs to the IF-1 family. As to quaternary structure, component of the 30S ribosomal translation pre-initiation complex which assembles on the 30S ribosome in the order IF-2 and IF-3, IF-1 and N-formylmethionyl-tRNA(fMet); mRNA recruitment can occur at any time during PIC assembly.

It is found in the cytoplasm. One of the essential components for the initiation of protein synthesis. Stabilizes the binding of IF-2 and IF-3 on the 30S subunit to which N-formylmethionyl-tRNA(fMet) subsequently binds. Helps modulate mRNA selection, yielding the 30S pre-initiation complex (PIC). Upon addition of the 50S ribosomal subunit IF-1, IF-2 and IF-3 are released leaving the mature 70S translation initiation complex. This is Translation initiation factor IF-1 2 from Ralstonia nicotianae (strain ATCC BAA-1114 / GMI1000) (Ralstonia solanacearum).